The primary structure comprises 491 residues: Glutamyl-tRNA(Gln) amidotransferase subunit A (491 aa).

Residues lysine 81 and serine 156 each act as charge relay system in the active site. Serine 180 functions as the Acyl-ester intermediate in the catalytic mechanism.

It belongs to the amidase family. GatA subfamily. In terms of assembly, heterotrimer of A, B and C subunits.

It catalyses the reaction L-glutamyl-tRNA(Gln) + L-glutamine + ATP + H2O = L-glutaminyl-tRNA(Gln) + L-glutamate + ADP + phosphate + H(+). Functionally, allows the formation of correctly charged Gln-tRNA(Gln) through the transamidation of misacylated Glu-tRNA(Gln) in organisms which lack glutaminyl-tRNA synthetase. The reaction takes place in the presence of glutamine and ATP through an activated gamma-phospho-Glu-tRNA(Gln). This chain is Glutamyl-tRNA(Gln) amidotransferase subunit A, found in Alcanivorax borkumensis (strain ATCC 700651 / DSM 11573 / NCIMB 13689 / SK2).